Here is an 840-residue protein sequence, read N- to C-terminus: Probable sulfate permease C869.05c (840 aa).

12 helical membrane passes run 120 to 140 (WLIN…PQGM), 148 to 168 (LPSE…CFFA), 173 to 193 (VSIG…ANVM), 208 to 228 (LALL…GFII), 230 to 250 (FIPV…ILSG), 278 to 298 (LPDT…LFFT), 315 to 335 (AFFL…TAIS), 410 to 430 (LIAM…PATG), 447 to 467 (IAGI…TDAF), 470 to 490 (IPNA…ILPM), 505 to 525 (CIFF…GIYV), and 527 to 547 (VCLA…SFLG). Residues 578 to 733 (NLEIQSPPPG…CVEVAAPLRD (156 aa)) form the STAS domain. Serine 823 bears the Phosphoserine mark.

This sequence belongs to the SLC26A/SulP transporter (TC 2.A.53) family.

It is found in the membrane. Its function is as follows. High affinity uptake of sulfate into the cell. The sequence is that of Probable sulfate permease C869.05c from Schizosaccharomyces pombe (strain 972 / ATCC 24843) (Fission yeast).